The primary structure comprises 720 residues: Photosystem I P700 chlorophyll a apoprotein A1 (720 aa).

The next 8 helical transmembrane spans lie at 61–84, 147–170, 186–210, 282–300, 337–360, 376–402, 424–446, and 522–540; these read VFSAHFGQLAIIFIWLSGMYFHGA, LYCTAIGALIFAALMLFAGWFHYH, LNHHLAGLLGLGSLSWAGHQIHVSL, TAHHHLAIAILFLIAGHMY, WHAQLALNLAMLGSLTIVVAHHMY, LSLFTHHMWIGGFLIVGAAAHAAIFMV, AIVSHLNWACIFLGFHSFGLYIH, and FLVHHIHAFTIHVTVLILL. [4Fe-4S] cluster-binding residues include cysteine 564 and cysteine 573. 2 helical membrane passes run 580–601 and 655–677; these read HVFLGLFWMYNAISVVIFHFSW and LSAYGLLFLGAHFVWAFSLMFLF. Chlorophyll a' is bound at residue histidine 666. Chlorophyll a contacts are provided by methionine 674 and tyrosine 682. Position 683 (tryptophan 683) interacts with phylloquinone. Residues 715–720 form a helical membrane-spanning segment; sequence AVGVAH.

It belongs to the PsaA/PsaB family. The PsaA/B heterodimer binds the P700 chlorophyll special pair and subsequent electron acceptors. PSI consists of a core antenna complex that captures photons, and an electron transfer chain that converts photonic excitation into a charge separation. The eukaryotic PSI reaction center is composed of at least 11 subunits. P700 is a chlorophyll a/chlorophyll a' dimer, A0 is one or more chlorophyll a, A1 is one or both phylloquinones and FX is a shared 4Fe-4S iron-sulfur center. is required as a cofactor.

It localises to the plastid. It is found in the chloroplast thylakoid membrane. It carries out the reaction reduced [plastocyanin] + hnu + oxidized [2Fe-2S]-[ferredoxin] = oxidized [plastocyanin] + reduced [2Fe-2S]-[ferredoxin]. In terms of biological role, psaA and PsaB bind P700, the primary electron donor of photosystem I (PSI), as well as the electron acceptors A0, A1 and FX. PSI is a plastocyanin-ferredoxin oxidoreductase, converting photonic excitation into a charge separation, which transfers an electron from the donor P700 chlorophyll pair to the spectroscopically characterized acceptors A0, A1, FX, FA and FB in turn. Oxidized P700 is reduced on the lumenal side of the thylakoid membrane by plastocyanin. The sequence is that of Photosystem I P700 chlorophyll a apoprotein A1 from Sequoia sempervirens (California redwood).